A 349-amino-acid polypeptide reads, in one-letter code: Shematrin-like protein 1 (349 aa).

Positions 1-16 (MLKLVCAVFLIATVSA) are cleaved as a signal peptide.

Prismatic layer of shell (at protein level).

It is found in the secreted. This Margaritifera margaritifera (Freshwater pearl mussel) protein is Shematrin-like protein 1.